A 375-amino-acid chain; its full sequence is UDP-4-amino-4,6-dideoxy-N-acetyl-beta-L-altrosamine transaminase (375 aa).

Substrate is bound by residues Tyr6, 26 to 29 (KQLT), Ala56, and Ser178. Position 183 is an N6-(pyridoxal phosphate)lysine (Lys183). Substrate is bound by residues Asn228 and 313-316 (QVHY).

Belongs to the DegT/DnrJ/EryC1 family.

The enzyme catalyses UDP-4-amino-4,6-dideoxy-N-acetyl-beta-L-altrosamine + 2-oxoglutarate = UDP-2-acetamido-2,6-dideoxy-beta-L-arabino-hex-4-ulose + L-glutamate. In terms of biological role, catalyzes the second step in the biosynthesis of pseudaminic acid, a sialic-acid-like sugar that is used to modify flagellin. Uses UDP-2-acetamido-2,6-dideoxy-beta-L-arabino-4-hexulose as substrate producing UDP-4-amino-4,6-dideoxy-beta-L-AltNAc. The chain is UDP-4-amino-4,6-dideoxy-N-acetyl-beta-L-altrosamine transaminase (pseC) from Helicobacter pylori (strain ATCC 700392 / 26695) (Campylobacter pylori).